The sequence spans 194 residues: Heme transporter hrg-1 (194 aa).

The next 4 membrane-spanning stretches (helical) occupy residues 45–65 (QIWI…VFAI), 71–91 (IAVT…HLHL), 113–133 (GATV…VAGI), and 143–163 (LMGA…KWSA). A Di-leucine motif motif is present at residues 182–183 (LL).

Belongs to the HRG family. As to expression, specifically expressed in the intestinal cells in larvae and adults.

It localises to the endosome membrane. The protein localises to the lysosome membrane. Heme transporter that regulates intracellular heme availability through the endosomal or lysosomal compartment. The chain is Heme transporter hrg-1 (hrg-1) from Caenorhabditis elegans.